Consider the following 225-residue polypeptide: UPF0758 protein Sputw3181_0338 (225 aa).

Positions 102-224 constitute an MPN domain; that stretch reads VLTNPDLTRD…IVSFAERGWI (123 aa). Residues H173, H175, and D186 each coordinate Zn(2+). The short motif at 173–186 is the JAMM motif element; the sequence is HNHPSGIAEPSQAD.

It belongs to the UPF0758 family.

In Shewanella sp. (strain W3-18-1), this protein is UPF0758 protein Sputw3181_0338.